A 102-amino-acid polypeptide reads, in one-letter code: Ribonuclease P protein component 1 (102 aa).

It belongs to the eukaryotic/archaeal RNase P protein component 1 family. As to quaternary structure, consists of a catalytic RNA component and at least 4-5 protein subunits.

It is found in the cytoplasm. It carries out the reaction Endonucleolytic cleavage of RNA, removing 5'-extranucleotides from tRNA precursor.. Functionally, part of ribonuclease P, a protein complex that generates mature tRNA molecules by cleaving their 5'-ends. This is Ribonuclease P protein component 1 from Archaeoglobus fulgidus (strain ATCC 49558 / DSM 4304 / JCM 9628 / NBRC 100126 / VC-16).